Here is a 58-residue protein sequence, read N- to C-terminus: MAADEKAQANGEQAKGKVKKVVGGAAGNESLKGKGHAEESKGDLRAAKEKAKDAIKRK.

The tract at residues 1–58 (MAADEKAQANGEQAKGKVKKVVGGAAGNESLKGKGHAEESKGDLRAAKEKAKDAIKRK) is disordered. A compositionally biased stretch (basic and acidic residues) spans 31 to 58 (LKGKGHAEESKGDLRAAKEKAKDAIKRK).

It belongs to the UPF0337 (CsbD) family.

This Streptomyces avermitilis (strain ATCC 31267 / DSM 46492 / JCM 5070 / NBRC 14893 / NCIMB 12804 / NRRL 8165 / MA-4680) protein is UPF0337 protein SAV_738.